A 922-amino-acid polypeptide reads, in one-letter code: uncharacterized protein (922 aa).

Disordered stretches follow at residues serine 459 to asparagine 522, serine 539 to glycine 627, glycine 649 to phenylalanine 668, glutamine 692 to leucine 835, and proline 856 to arginine 879. Positions lysine 546–serine 567 are enriched in basic residues. Residues lysine 582–glutamine 600 are compositionally biased toward basic and acidic residues. Positions serine 651–serine 660 are enriched in low complexity. The span at glutamine 692–cysteine 702 shows a compositional bias: basic and acidic residues. Composition is skewed to polar residues over residues aspartate 755 to glycine 779 and lysine 790 to glutamine 824. Residues threonine 872–leucine 899 adopt a coiled-coil conformation.

This is an uncharacterized protein from Homo sapiens (Human).